The chain runs to 394 residues: Metallophosphoesterase 1 (394 aa).

The helical transmembrane segment at 27–47 threads the bilayer; sequence TVVVISVLLFCEYFIYYLVLF. A divalent metal cation contacts are provided by Asp74, Asp116, Asn154, His247, His301, and His303. The chain crosses the membrane as a helical span at residues 354–374; it reads TVLTTYCAAAAFLLVLILAHF.

The protein belongs to the metallophosphoesterase superfamily. MPPE1 family. In terms of assembly, interacts with GPI-anchor proteins (via the GPI portion). Interacts with TMED10. Mn(2+) serves as cofactor.

The protein resides in the endoplasmic reticulum-Golgi intermediate compartment membrane. Functionally, metallophosphoesterase that catalyzes the removal of a side-chain ethanolamine-phosphate (EtNP) from the second mannose of the GPI-anchor protein intermediate. Participates in the glycan remodeling steps of GPI-anchor maturation to allow an efficient transport of GPI-anchor proteins from the endoplasmic reticulum to the Golgi. In Rattus norvegicus (Rat), this protein is Metallophosphoesterase 1.